A 1211-amino-acid chain; its full sequence is Homeodomain-interacting protein kinase 1 (1211 aa).

Lys-25 participates in a covalent cross-link: Glycyl lysine isopeptide (Lys-Gly) (interchain with G-Cter in SUMO); alternate. A Glycyl lysine isopeptide (Lys-Gly) (interchain with G-Cter in SUMO2); alternate cross-link involves residue Lys-25. Residues Lys-120 and Lys-124 each participate in a glycyl lysine isopeptide (Lys-Gly) (interchain with G-Cter in SUMO2) cross-link. The Protein kinase domain maps to Tyr-190–Val-518. ATP-binding positions include Leu-196–Val-204 and Lys-219. Asp-315 acts as the Proton acceptor in catalysis. Residues Gln-835–Ser-856 form a disordered region. The Nuclear localization signal 1 (NLS1) motif lies at Arg-844–Lys-847. Ser-872 carries the post-translational modification Phosphoserine. Residues Pro-885–Thr-1094 are interaction with TP53. The interval Gln-891 to Thr-998 is required for localization to nuclear speckles. Residues Pro-902–Ser-926 are SUMO interaction motifs (SIM); required for nuclear localization and kinase activity. A Glycyl lysine isopeptide (Lys-Gly) (interchain with G-Cter in SUMO2) cross-link involves residue Lys-991. Disordered regions lie at residues Gln-1002–Ser-1023, Leu-1047–Arg-1070, and Phe-1085–His-1105. Composition is skewed to low complexity over residues Ser-1048–Ser-1064 and His-1096–His-1105. Ser-1201 is modified (phosphoserine). Residue Lys-1204 forms a Glycyl lysine isopeptide (Lys-Gly) (interchain with G-Cter in SUMO) linkage.

The protein belongs to the protein kinase superfamily. CMGC Ser/Thr protein kinase family. HIPK subfamily. As to quaternary structure, interacts with Nkx1-2, Nkx2-5, MYB, PARK7, DAXX and p53/TP53. Part of a cytoplasmic complex made of HIPK1, DAB2IP and MAP3K5 in response to TNF. This complex formation promotes MAP3K5-JNK activation and subsequent apoptosis. In terms of processing, phosphorylated and activated by JNK1. Autophosphorylated. Sumoylated. When conjugated it is directed to nuclear speckles. SENP1-mediated desumoylation is mediated by TNF in response to stress stimuli, triggering transient translocation from nucleus to cytoplasm.

It is found in the nucleus. Its subcellular location is the cytoplasm. It localises to the nucleus speckle. It catalyses the reaction L-seryl-[protein] + ATP = O-phospho-L-seryl-[protein] + ADP + H(+). The catalysed reaction is L-threonyl-[protein] + ATP = O-phospho-L-threonyl-[protein] + ADP + H(+). In terms of biological role, serine/threonine-protein kinase involved in transcription regulation and TNF-mediated cellular apoptosis. Plays a role as a corepressor for homeodomain transcription factors. Phosphorylates DAXX and MYB. Phosphorylates DAXX in response to stress, and mediates its translocation from the nucleus to the cytoplasm. Inactivates MYB transcription factor activity by phosphorylation. Prevents MAP3K5-JNK activation in the absence of TNF. TNF triggers its translocation to the cytoplasm in response to stress stimuli, thus activating nuclear MAP3K5-JNK by derepression and promoting apoptosis. May be involved in anti-oxidative stress responses. Involved in the regulation of eye size, lens formation and retinal lamination during late embryogenesis. Promotes angiogenesis and to be involved in erythroid differentiation. May be involved in malignant squamous cell tumor formation. Phosphorylates PAGE4 at 'Thr-51' which is critical for the ability of PAGE4 to potentiate the transcriptional activator activity of JUN. The chain is Homeodomain-interacting protein kinase 1 from Rattus norvegicus (Rat).